We begin with the raw amino-acid sequence, 392 residues long: Iron-sulfur cluster assembly SufBD family protein ML0594 (392 aa).

This sequence belongs to the iron-sulfur cluster assembly SufBD family.

The chain is Iron-sulfur cluster assembly SufBD family protein ML0594 from Mycobacterium leprae (strain TN).